A 305-amino-acid polypeptide reads, in one-letter code: Oxygen-dependent coproporphyrinogen-III oxidase (305 aa).

Residue serine 98 coordinates substrate. Histidine 102 and histidine 112 together coordinate a divalent metal cation. Histidine 112 functions as the Proton donor in the catalytic mechanism. Residue 114–116 coordinates substrate; the sequence is NVR. A divalent metal cation is bound by residues histidine 151 and histidine 181. Residues 246–281 are important for dimerization; the sequence is YVEFNLVYDRGTLFGLQSGGRTESILMSMPPLARWE. 264–266 is a binding site for substrate; the sequence is GGR.

This sequence belongs to the aerobic coproporphyrinogen-III oxidase family. As to quaternary structure, homodimer. The cofactor is a divalent metal cation.

It localises to the cytoplasm. The enzyme catalyses coproporphyrinogen III + O2 + 2 H(+) = protoporphyrinogen IX + 2 CO2 + 2 H2O. Its pathway is porphyrin-containing compound metabolism; protoporphyrin-IX biosynthesis; protoporphyrinogen-IX from coproporphyrinogen-III (O2 route): step 1/1. Involved in the heme biosynthesis. Catalyzes the aerobic oxidative decarboxylation of propionate groups of rings A and B of coproporphyrinogen-III to yield the vinyl groups in protoporphyrinogen-IX. The protein is Oxygen-dependent coproporphyrinogen-III oxidase of Vibrio campbellii (strain ATCC BAA-1116).